We begin with the raw amino-acid sequence, 1043 residues long: Sucrose-phosphate synthase 1 (1043 aa).

A compositionally biased stretch (basic and acidic residues) spans E95–T117. The interval E95–G127 is disordered. Phosphoserine occurs at positions 121, 125, 152, and 155. The interval P670–L693 is disordered.

Belongs to the glycosyltransferase 1 family. Homodimer or homotetramer. In terms of processing, phosphorylated at Ser-152 upon sucrose supply. As to expression, expressed in seeds, stems, rosette leaves, flowers and siliques. Highly expressed in maturing nectaries.

It catalyses the reaction beta-D-fructose 6-phosphate + UDP-alpha-D-glucose = sucrose 6(F)-phosphate + UDP + H(+). It participates in glycan biosynthesis; sucrose biosynthesis; sucrose from D-fructose 6-phosphate and UDP-alpha-D-glucose: step 1/2. With respect to regulation, activity is regulated by phosphorylation and moderated by concentration of metabolites and light. Functionally, plays a major role in photosynthetic sucrose synthesis by catalyzing the rate-limiting step of sucrose biosynthesis from UDP-glucose and fructose- 6-phosphate. Involved in the regulation of carbon partitioning in the leaves of plants. May regulate the synthesis of sucrose and therefore play a major role as a limiting factor in the export of photoassimilates out of the leaf. Plays a role for sucrose availability that is essential for plant growth and fiber elongation. Required for nectar secretion. The polypeptide is Sucrose-phosphate synthase 1 (SPS1) (Arabidopsis thaliana (Mouse-ear cress)).